Here is a 120-residue protein sequence, read N- to C-terminus: UPF0231 protein Spro_4007 (120 aa).

The protein belongs to the UPF0231 family.

This Serratia proteamaculans (strain 568) protein is UPF0231 protein Spro_4007.